The primary structure comprises 352 residues: MEGISIYTSDNYSEELGSGDYDSIKEPCFREENAHFNRIFLPTIYSIIFLTGIVGNGLVILVMGYQKKLRSMTDKYRLHLSVADLLFVITLPFWAVDAVANWYFGNFLCKAVHVIYTVNLYSSVLILAFISLDRYLAIVHATNSQRPRKLLAEKVVYVGVWIPALLLTIPDFIFANVSEAEDRYICDRFYPNDLWVVVFQFQHIMVGLILPGIVILSCYCIIISKLSHSKGHQKRKALKTTVILILAFFACWLPYYIGISIDSFILLEIIKQGCEFESTVHKWISITEALAFFHCCLNPILYAFLGAKFKSSAQHALTSVSRGSSLKILSKGKRGGHSSVSTESESSSFHSS.

The segment at 1-21 is important for chemokine binding and signaling; the sequence is MEGISIYTSDNYSEELGSGDY. The Extracellular segment spans residues 1-38; it reads MEGISIYTSDNYSEELGSGDYDSIKEPCFREENAHFNR. A Sulfotyrosine modification is found at Tyr-7. N-linked (GlcNAc...) asparagine glycosylation is present at Asn-11. Tyr-12 is subject to Sulfotyrosine. O-linked (Xyl...) (chondroitin sulfate) serine glycosylation is present at Ser-18. Residue Tyr-21 is modified to Sulfotyrosine. Cystine bridges form between Cys-28-Cys-274 and Cys-109-Cys-186. A helical membrane pass occupies residues 39 to 63; it reads IFLPTIYSIIFLTGIVGNGLVILVM. The Cytoplasmic segment spans residues 64–77; that stretch reads GYQKKLRSMTDKYR. A helical membrane pass occupies residues 78–99; sequence LHLSVADLLFVITLPFWAVDAV. Residues 94 to 97 are chemokine binding; it reads WAVD. At 100–110 the chain is on the extracellular side; that stretch reads ANWYFGNFLCK. Residues 111 to 130 form a helical membrane-spanning segment; the sequence is AVHVIYTVNLYSSVLILAFI. The interval 113-117 is chemokine binding; the sequence is HVIYT. The Cytoplasmic segment spans residues 131 to 154; that stretch reads SLDRYLAIVHATNSQRPRKLLAEK. The Important for signaling signature appears at 133–135; the sequence is DRY. An involved in dimerization; when bound to chemokine region spans residues 135–147; it reads YLAIVHATNSQRP. Residues 155–174 traverse the membrane as a helical segment; that stretch reads VVYVGVWIPALLLTIPDFIF. At 175-195 the chain is on the extracellular side; sequence ANVSEAEDRYICDRFYPNDLW. The tract at residues 186-190 is chemokine binding, important for signaling; sequence CDRFY. Positions 191 to 210 are involved in dimerization; sequence PNDLWVVVFQFQHIMVGLIL. A helical transmembrane segment spans residues 196-216; that stretch reads VVVFQFQHIMVGLILPGIVIL. Over 217 to 241 the chain is Cytoplasmic; that stretch reads SCYCIIISKLSHSKGHQKRKALKTT. The chain crosses the membrane as a helical span at residues 242 to 261; that stretch reads VILILAFFACWLPYYIGISI. At 262–282 the chain is on the extracellular side; it reads DSFILLEIIKQGCEFESTVHK. The segment at 266–268 is involved in dimerization; it reads LLE. A helical transmembrane segment spans residues 283–302; it reads WISITEALAFFHCCLNPILY. Over 303–352 the chain is Cytoplasmic; that stretch reads AFLGAKFKSSAQHALTSVSRGSSLKILSKGKRGGHSSVSTESESSSFHSS. Phosphoserine occurs at positions 319 and 321. Residues Ser-324 and Ser-325 each carry the phosphoserine; by PKC and GRK6 modification. Residues 329–352 form a disordered region; that stretch reads LSKGKRGGHSSVSTESESSSFHSS. Ser-330 carries the phosphoserine; by GRK6 modification. A Glycyl lysine isopeptide (Lys-Gly) (interchain with G-Cter in ubiquitin) cross-link involves residue Lys-331. The span at 337–352 shows a compositional bias: low complexity; it reads HSSVSTESESSSFHSS. Ser-339 carries the post-translational modification Phosphoserine; by GRK6. Residues Ser-348 and Ser-351 each carry the phosphoserine modification.

The protein belongs to the G-protein coupled receptor 1 family. Monomer. Can form homodimers. Interacts with CD164. Interacts with ARRB2; the interaction is dependent on the C-terminal phosphorylation of CXCR4 and allows activation of MAPK1 and MAPK3. Interacts with ARR3; the interaction is dependent on the C-terminal phosphorylation of CXCR4 and modulates calcium mobilization. Interacts with RNF113A; the interaction, enhanced by CXCL12, promotes CXCR4 ubiquitination and subsequent degradation. Interacts (via the cytoplasmic C-terminal) with ITCH (via the WW domains I and II); the interaction, enhanced by CXCL12, promotes CXCR4 ubiquitination and leads to its degradation. Interacts with extracellular ubiquitin. Interacts with DBN1; this interaction is enhanced by antigenic stimulation. Following LPS binding, may form a complex with GDF5, HSP90AA1 and HSPA8. In terms of processing, phosphorylated on agonist stimulation. Rapidly phosphorylated on serine and threonine residues in the C-terminal. Phosphorylation at Ser-324 and Ser-325 leads to recruitment of ITCH, ubiquitination and protein degradation. Post-translationally, ubiquitinated after ligand binding, leading to its degradation. Ubiquitinated by ITCH at the cell membrane on agonist stimulation. The ubiquitin-dependent mechanism, endosomal sorting complex required for transport (ESCRT), then targets CXCR4 for lysosomal degradation. This process is dependent also on prior Ser-/Thr-phosphorylation in the C-terminal of CXCR4. Also binding of ARRB1 to STAM negatively regulates CXCR4 sorting to lysosomes though modulating ubiquitination of SFR5S. Sulfation is required for efficient binding of CXCL12/SDF-1alpha and promotes its dimerization. In terms of processing, O- and N-glycosylated. N-glycosylation can mask coreceptor function. The O-glycosylation chondroitin sulfate attachment does not affect interaction with CXCL12/SDF-1alpha nor its coreceptor activity.

The protein resides in the cell membrane. It is found in the cell junction. It localises to the early endosome. The protein localises to the late endosome. Its subcellular location is the lysosome. Functionally, receptor for the C-X-C chemokine CXCL12/SDF-1 that transduces a signal by increasing intracellular calcium ion levels and enhancing MAPK1/MAPK3 activation. Involved in the AKT signaling cascade. Plays a role in regulation of cell migration, e.g. during wound healing. Acts as a receptor for extracellular ubiquitin; leading to enhanced intracellular calcium ions and reduced cellular cAMP levels. Binds bacterial lipopolysaccharide (LPS) et mediates LPS-induced inflammatory response, including TNF secretion by monocytes. Involved in hematopoiesis and in cardiac ventricular septum formation. Also plays an essential role in vascularization of the gastrointestinal tract, probably by regulating vascular branching and/or remodeling processes in endothelial cells. Involved in cerebellar development. In the CNS, could mediate hippocampal-neuron survival. This Tupaia chinensis (Chinese tree shrew) protein is C-X-C chemokine receptor type 4 (CXCR4).